A 106-amino-acid polypeptide reads, in one-letter code: Protein Rev (106 aa).

Positions 8–16 (VIKFLYQSN) are homomultimerization. Residues 13 to 36 (YQSNPPPRPEGTRQARRNRRRRWR) are disordered. A Nuclear localization signal and RNA-binding (RRE) motif is present at residues 24–40 (TRQARRNRRRRWRARQR). Basic residues predominate over residues 26 to 36 (QARRNRRRRWR). The short motif at 63–74 (LQLPPLERLTLD) is the Nuclear export signal and binding to XPO1 element. Phosphoserine; by host is present on residues Ser-82 and Ser-89.

The protein belongs to the HIV-1 REV protein family. Homomultimer; when bound to the RRE. Multimeric assembly is essential for activity and may involve XPO1. Binds to human KPNB1, XPO1, TNPO1, RANBP5 and IPO7. Interacts with the viral Integrase. Interacts with human KHDRBS1. Interacts with human NAP1; this interaction decreases Rev multimerization and stimulates its activity. Interacts with human DEAD-box helicases DDX3 and DDX24; these interactions may serve for viral RNA export to the cytoplasm and packaging, respectively. Interacts with human PSIP1; this interaction may inhibit HIV-1 DNA integration by promoting dissociation of the Integrase-LEDGF/p75 complex. Asymmetrically arginine dimethylated at one site by host PRMT6. Methylation impairs the RNA-binding activity and export of viral RNA from the nucleus to the cytoplasm. Post-translationally, phosphorylated by protein kinase CK2. Presence of, and maybe binding to the N-terminus of the regulatory beta subunit of CK2 is necessary for CK2-mediated Rev's phosphorylation.

Its subcellular location is the host nucleus. It is found in the host nucleolus. It localises to the host cytoplasm. Its function is as follows. Escorts unspliced or incompletely spliced viral pre-mRNAs (late transcripts) out of the nucleus of infected cells. These pre-mRNAs carry a recognition sequence called Rev responsive element (RRE) located in the env gene, that is not present in fully spliced viral mRNAs (early transcripts). This function is essential since most viral proteins are translated from unspliced or partially spliced pre-mRNAs which cannot exit the nucleus by the pathway used by fully processed cellular mRNAs. Rev itself is translated from a fully spliced mRNA that readily exits the nucleus. Rev's nuclear localization signal (NLS) binds directly to KPNB1/Importin beta-1 without previous binding to KPNA1/Importin alpha-1. KPNB1 binds to the GDP bound form of RAN (Ran-GDP) and targets Rev to the nucleus. In the nucleus, the conversion from Ran-GDP to Ran-GTP dissociates Rev from KPNB1 and allows Rev's binding to the RRE in viral pre-mRNAs. Rev multimerization on the RRE via cooperative assembly exposes its nuclear export signal (NES) to the surface. Rev can then form a complex with XPO1/CRM1 and Ran-GTP, leading to nuclear export of the complex. Conversion from Ran-GTP to Ran-GDP mediates dissociation of the Rev/RRE/XPO1/RAN complex, so that Rev can return to the nucleus for a subsequent round of export. Beside KPNB1, also seems to interact with TNPO1/Transportin-1, RANBP5/IPO5 and IPO7/RANBP7 for nuclear import. The nucleoporin-like HRB/RIP is an essential cofactor that probably indirectly interacts with Rev to release HIV RNAs from the perinuclear region to the cytoplasm. This Homo sapiens (Human) protein is Protein Rev.